Consider the following 104-residue polypeptide: Ribonuclease P protein component 4 (104 aa).

Positions 63, 66, 89, and 92 each coordinate Zn(2+).

It belongs to the eukaryotic/archaeal RNase P protein component 4 family. Consists of a catalytic RNA component and at least 4-5 protein subunits. The cofactor is Zn(2+).

The protein resides in the cytoplasm. The enzyme catalyses Endonucleolytic cleavage of RNA, removing 5'-extranucleotides from tRNA precursor.. In terms of biological role, part of ribonuclease P, a protein complex that generates mature tRNA molecules by cleaving their 5'-ends. This chain is Ribonuclease P protein component 4, found in Methanoregula boonei (strain DSM 21154 / JCM 14090 / 6A8).